A 1023-amino-acid chain; its full sequence is MFHLRTCAAKLRPLTASQTVKTFSQNRPAAARTFQQIRCYSAPVAAEPFLSGTSSNYVEEMYCAWLENPKSVHKSWDIFFRNTNAGAPPGTAYQSPLPLSRGSLAAVAHAQSLVEAQPNVDKLVEDHLAVQSLIRAYQIRGHHVAQLDPLGILDADLDSSVPADIISSTDKLGFYGLDESDLDKVFHLPTTTFIGGQESALPLREIIRRLEMAYCQHIGVEFMFINDLEQCQWIRQKFETPGIMQFTNEEKRTLLARLVRSTRFEEFLQRKWSSEKRFGLEGCEVLIPALKTIIDKSSENGVDYVIMGMPHRGRLNVLANVIRKELEQIFCQFDSKLEAADEGSGDVKYHLGMYHRRINRVTDRNITLSLVANPSHLEAADPVVMGKTKAEQFYCGDTEGKKVMSILLHGDAAFAGQGIVYETFHLSDLPSYTTHGTVHVVVNNQIGFTTDPRMARSSPYPTDVARVVNAPIFHVNSDDPEAVMYVCKVAAEWRSTFHKDVVVDLVCYRRNGHNEMDEPMFTQPLMYKQIRKQKPVLQKYAELLVSQGVVNQPEYEEEISKYDKICEEAFARSKDEKILHIKHWLDSPWPGFFTLDGQPRSMSCPSTGLTEDILTHIGNVASSVPVENFTIHGGLSRILKTRGEMVKNRTVDWALAEYMAFGSLLKEGIHIRLSGQDVERGTFSHRHHVLHDQNVDKRTCIPMNHLWPNQAPYTVCNSSLSEYGVLGFELGFAMASPNALVLWEAQFGDFHNTAQCIIDQFICPGQAKWVRQNGIVLLLPHGMEGMGPEHSSARPERFLQMCNDDPDVLPDLKEANFDINQLYDCNWVVVNCSTPGNFFHVLRRQILLPFRKPLIIFTPKSLLRHPEARSSFDEMLPGTHFQRVIPEDGPAAQNPENVKRLLFCTGKVYYDLTRERKARDMVGQVAITRIEQLSPFPFDLLLKEVQKYPNAELAWCQEEHKNQGYYDYVKPRLRTTISRAKPVWYAGRDPAAAPATGNKKTHLTELQRLLDTAFDLDVFKNFS.

Residues 1–40 constitute a mitochondrion transit peptide; that stretch reads MFHLRTCAAKLRPLTASQTVKTFSQNRPAAARTFQQIRCY. Residue Lys-74 is modified to N6-succinyllysine. The residue at position 100 (Ser-100) is a Phosphoserine. Ca(2+) contacts are provided by His-143, Asp-156, and Asp-158. Position 312 (Arg-312) interacts with thiamine diphosphate. The residue at position 401 (Lys-401) is an N6-acetyllysine. Thiamine diphosphate is bound by residues Asp-411, Asn-444, and Ile-446. Mg(2+) is bound by residues Asp-411, Asn-444, and Ile-446. Lys-534 is covalently cross-linked (Glycyl lysine isopeptide (Lys-Gly) (interchain with G-Cter in ubiquitin)). Lys-564 is subject to N6-succinyllysine. Position 676 (Gln-676) interacts with thiamine diphosphate. Lys-970 is subject to N6-acetyllysine.

The protein belongs to the alpha-ketoglutarate dehydrogenase family. Homodimer. The 2-oxoglutarate dehydrogenase complex is composed of OGDH (2-oxoglutarate dehydrogenase; E1), DLST (dihydrolipoamide succinyltransferase; E2), DLD (dihydrolipoamide dehydrogenase; E3), and the assembly factor KGD4. It contains multiple copies of the three enzymatic components (E1, E2 and E3). In the nucleus, the 2-oxoglutarate dehydrogenase complex associates with KAT2A. Interacts with ABHD11; this interaction maintains the functional lipoylation of the 2-oxoglutarate dehydrogenase complex. Thiamine diphosphate serves as cofactor. Mg(2+) is required as a cofactor.

The protein resides in the mitochondrion. It is found in the nucleus. The enzyme catalyses N(6)-[(R)-lipoyl]-L-lysyl-[protein] + 2-oxoglutarate + H(+) = N(6)-[(R)-S(8)-succinyldihydrolipoyl]-L-lysyl-[protein] + CO2. With respect to regulation, calcium ions and ADP stimulate, whereas ATP and NADH reduce catalytic activity. Its function is as follows. 2-oxoglutarate dehydrogenase (E1o) component of the 2-oxoglutarate dehydrogenase complex (OGDHC). Participates in the first step, rate limiting for the overall conversion of 2-oxoglutarate to succinyl-CoA and CO(2) catalyzed by the whole OGDHC. Catalyzes the irreversible decarboxylation of 2-oxoglutarate (alpha-ketoglutarate) via the thiamine diphosphate (ThDP) cofactor and subsequent transfer of the decarboxylated acyl intermediate on an oxidized dihydrolipoyl group that is covalently amidated to the E2 enzyme (dihydrolipoyllysine-residue succinyltransferase or DLST). Plays a key role in the Krebs (citric acid) cycle, which is a common pathway for oxidation of fuel molecules, including carbohydrates, fatty acids, and amino acids. Can catalyze the decarboxylation of 2-oxoadipate in vitro, but at a much lower rate than 2-oxoglutarate. Mainly active in the mitochondrion. A fraction of the 2-oxoglutarate dehydrogenase complex also localizes in the nucleus and is required for lysine succinylation of histones: associates with KAT2A on chromatin and provides succinyl-CoA to histone succinyltransferase KAT2A. The polypeptide is 2-oxoglutarate dehydrogenase complex component E1 (Homo sapiens (Human)).